We begin with the raw amino-acid sequence, 219 residues long: Octanoyltransferase (219 aa).

The region spanning 32–207 (ENSQDEIWIV…TLSQELGLDK (176 aa)) is the BPL/LPL catalytic domain. Residues 71–78 (RGGQVTYH), 138–140 (SLG), and 151–153 (GLA) contribute to the substrate site. The Acyl-thioester intermediate role is filled by Cys-169.

The protein belongs to the LipB family.

The protein resides in the cytoplasm. It catalyses the reaction octanoyl-[ACP] + L-lysyl-[protein] = N(6)-octanoyl-L-lysyl-[protein] + holo-[ACP] + H(+). It functions in the pathway protein modification; protein lipoylation via endogenous pathway; protein N(6)-(lipoyl)lysine from octanoyl-[acyl-carrier-protein]: step 1/2. Catalyzes the transfer of endogenously produced octanoic acid from octanoyl-acyl-carrier-protein onto the lipoyl domains of lipoate-dependent enzymes. Lipoyl-ACP can also act as a substrate although octanoyl-ACP is likely to be the physiological substrate. The sequence is that of Octanoyltransferase from Shewanella pealeana (strain ATCC 700345 / ANG-SQ1).